The sequence spans 503 residues: Cytochrome P450 3A43 (503 aa).

Cys442 lines the heme pocket.

Belongs to the cytochrome P450 family. Requires heme as cofactor. In terms of tissue distribution, highest expression level in prostate. Also expressed in liver, kidney, pancreas, fetal liver and fetal skeletal muscle.

It localises to the endoplasmic reticulum membrane. Its subcellular location is the microsome membrane. It catalyses the reaction an organic molecule + reduced [NADPH--hemoprotein reductase] + O2 = an alcohol + oxidized [NADPH--hemoprotein reductase] + H2O + H(+). Exhibits low testosterone 6-beta-hydroxylase activity. The chain is Cytochrome P450 3A43 (CYP3A43) from Homo sapiens (Human).